A 393-amino-acid chain; its full sequence is Formate-dependent phosphoribosylglycinamide formyltransferase (393 aa).

N(1)-(5-phospho-beta-D-ribosyl)glycinamide contacts are provided by residues 22–23 (EL) and Glu82. Residues Arg114, Lys155, 160-165 (SSGKGQ), 195-198 (EGFI), and Glu203 each bind ATP. The 190-residue stretch at 119-308 (RLAAEELKLP…QFALHARAIL (190 aa)) folds into the ATP-grasp domain. Mg(2+) is bound by residues Glu267 and Glu279. Residues Asp286, Lys356, and 363-364 (RR) each bind N(1)-(5-phospho-beta-D-ribosyl)glycinamide.

It belongs to the PurK/PurT family. As to quaternary structure, homodimer.

The catalysed reaction is N(1)-(5-phospho-beta-D-ribosyl)glycinamide + formate + ATP = N(2)-formyl-N(1)-(5-phospho-beta-D-ribosyl)glycinamide + ADP + phosphate + H(+). It participates in purine metabolism; IMP biosynthesis via de novo pathway; N(2)-formyl-N(1)-(5-phospho-D-ribosyl)glycinamide from N(1)-(5-phospho-D-ribosyl)glycinamide (formate route): step 1/1. Functionally, involved in the de novo purine biosynthesis. Catalyzes the transfer of formate to 5-phospho-ribosyl-glycinamide (GAR), producing 5-phospho-ribosyl-N-formylglycinamide (FGAR). Formate is provided by PurU via hydrolysis of 10-formyl-tetrahydrofolate. This Pseudomonas syringae pv. syringae (strain B728a) protein is Formate-dependent phosphoribosylglycinamide formyltransferase.